Here is a 1031-residue protein sequence, read N- to C-terminus: Beta-galactosidase (1031 aa).

Substrate is bound by residues Asn100 and Asp198. Asp198 contributes to the Na(+) binding site. Mg(2+)-binding residues include Glu412, His414, and Glu457. Substrate-binding positions include Glu457 and 533 to 536 (EYAH). Catalysis depends on Glu457, which acts as the Proton donor. Glu533 acts as the Nucleophile in catalysis. Asn593 contacts Mg(2+). Residues Phe597 and Asn600 each contribute to the Na(+) site. The substrate site is built by Asn600 and Trp1005.

It belongs to the glycosyl hydrolase 2 family. Homotetramer. It depends on Mg(2+) as a cofactor. The cofactor is Na(+).

The catalysed reaction is Hydrolysis of terminal non-reducing beta-D-galactose residues in beta-D-galactosides.. This Vibrio vulnificus (strain YJ016) protein is Beta-galactosidase.